We begin with the raw amino-acid sequence, 249 residues long: DNA repair protein RecO (249 aa).

Belongs to the RecO family.

Involved in DNA repair and RecF pathway recombination. This is DNA repair protein RecO from Leptospira biflexa serovar Patoc (strain Patoc 1 / Ames).